Reading from the N-terminus, the 179-residue chain is uncharacterized protein (179 aa).

Disordered stretches follow at residues 26–103 (LSAV…SYED) and 136–179 (KHKA…SWFN). Residues 34–61 (QQGKNEEQRQHDEWVAERNREIQQEKQR) show a composition bias toward basic and acidic residues. Residues 63 to 79 (ANAQAAANKRAATAAAN) show a composition bias toward low complexity. 2 stretches are compositionally biased toward basic and acidic residues: residues 82-103 (ARQDKLDAEASADKKRDQSYED) and 158-179 (GGRDLMKSVGKAEENKSDSWFN).

This is an uncharacterized protein from Escherichia coli (strain K12).